The chain runs to 193 residues: MTRPSDGGRIEVICGCMYSGKTEELIRRMRQVRIARQSYRIFTPRMDTRYAEGQVASHSGSRLEAITVATMKDILAHAEDAQVVAIDELHLFDDDPAEMVRGCQWLANRGVRVIVAGLDLNYRAEPFPAMMHLLALAEQVDKLYAICVKCGAYATRSQRLIDGKPAPADAPTIVVGGLDMYEARCRTCYEPAV.

Residues 15–22 and 87–90 contribute to the ATP site; these read GCMYSGKT and DELH. The Proton acceptor role is filled by glutamate 88. Zn(2+)-binding residues include cysteine 147, cysteine 150, cysteine 185, and cysteine 188.

The protein belongs to the thymidine kinase family. Homotetramer.

The protein resides in the cytoplasm. The enzyme catalyses thymidine + ATP = dTMP + ADP + H(+). This Chloroflexus aurantiacus (strain ATCC 29366 / DSM 635 / J-10-fl) protein is Thymidine kinase.